The sequence spans 617 residues: Protelomerase (617 aa).

4 residues coordinate DNA: R270, K295, R376, and H409. Y418 (nucleophile) is an active-site residue. The segment covering 535–562 (DAEEDEIEEDFTDEEIDDTEFDVSDNAS) has biased composition (acidic residues). The segment at 535–575 (DAEEDEIEEDFTDEEIDDTEFDVSDNASDEDKPEDKPRFAA) is disordered. Basic and acidic residues predominate over residues 563–575 (DEDKPEDKPRFAA).

This sequence belongs to the Caudoviricetes Protelomerase family. Monomer. Homodimer; in presence of DNA.

Converts the circular intermediates produced by the viral replication and carrying a joined telomere site to a linear DNA molecule with covalently closed hairpin ends. The viral circular DNA is cleaved at a palindromic site called telRL thereby generating a linear prophage plasmid with telomeres. Binds covalently to the 3'-phosphoryl of the cleaved strands. This Yersinia enterocolitica (Bacteriophage PY54) protein is Protelomerase (tel).